Here is a 227-residue protein sequence, read N- to C-terminus: Cytochrome c oxidase subunit 2 (227 aa).

Residues 1-14 are Mitochondrial intermembrane-facing; it reads MAYPFQLGLQDATS. A helical transmembrane segment spans residues 15-45; the sequence is PIMEELMNFHDHTLMIVFLISSLVLYIISLM. Topologically, residues 46–59 are mitochondrial matrix; the sequence is LTTKLTHTSTMDAQ. A helical transmembrane segment spans residues 60-87; that stretch reads EVETIWTILPAAILILIALPSLRILYMM. The Mitochondrial intermembrane portion of the chain corresponds to 88–227; the sequence is DEINNPVLTV…YFENWSASMI (140 aa). Residues histidine 161, cysteine 196, glutamate 198, cysteine 200, histidine 204, and methionine 207 each contribute to the Cu cation site. Residue glutamate 198 participates in Mg(2+) binding. Tyrosine 218 is subject to Phosphotyrosine.

It belongs to the cytochrome c oxidase subunit 2 family. In terms of assembly, component of the cytochrome c oxidase (complex IV, CIV), a multisubunit enzyme composed of 14 subunits. The complex is composed of a catalytic core of 3 subunits MT-CO1, MT-CO2 and MT-CO3, encoded in the mitochondrial DNA, and 11 supernumerary subunits COX4I, COX5A, COX5B, COX6A, COX6B, COX6C, COX7A, COX7B, COX7C, COX8 and NDUFA4, which are encoded in the nuclear genome. The complex exists as a monomer or a dimer and forms supercomplexes (SCs) in the inner mitochondrial membrane with NADH-ubiquinone oxidoreductase (complex I, CI) and ubiquinol-cytochrome c oxidoreductase (cytochrome b-c1 complex, complex III, CIII), resulting in different assemblies (supercomplex SCI(1)III(2)IV(1) and megacomplex MCI(2)III(2)IV(2)). Found in a complex with TMEM177, COA6, COX18, COX20, SCO1 and SCO2. Interacts with TMEM177 in a COX20-dependent manner. Interacts with COX20. Interacts with COX16. Cu cation is required as a cofactor.

It is found in the mitochondrion inner membrane. The catalysed reaction is 4 Fe(II)-[cytochrome c] + O2 + 8 H(+)(in) = 4 Fe(III)-[cytochrome c] + 2 H2O + 4 H(+)(out). Component of the cytochrome c oxidase, the last enzyme in the mitochondrial electron transport chain which drives oxidative phosphorylation. The respiratory chain contains 3 multisubunit complexes succinate dehydrogenase (complex II, CII), ubiquinol-cytochrome c oxidoreductase (cytochrome b-c1 complex, complex III, CIII) and cytochrome c oxidase (complex IV, CIV), that cooperate to transfer electrons derived from NADH and succinate to molecular oxygen, creating an electrochemical gradient over the inner membrane that drives transmembrane transport and the ATP synthase. Cytochrome c oxidase is the component of the respiratory chain that catalyzes the reduction of oxygen to water. Electrons originating from reduced cytochrome c in the intermembrane space (IMS) are transferred via the dinuclear copper A center (CU(A)) of subunit 2 and heme A of subunit 1 to the active site in subunit 1, a binuclear center (BNC) formed by heme A3 and copper B (CU(B)). The BNC reduces molecular oxygen to 2 water molecules using 4 electrons from cytochrome c in the IMS and 4 protons from the mitochondrial matrix. The polypeptide is Cytochrome c oxidase subunit 2 (MT-CO2) (Praomys tullbergi (Tullberg's soft-furred rat)).